Here is a 662-residue protein sequence, read N- to C-terminus: p-hydroxybenzoic acid efflux pump subunit AaeB (662 aa).

The next 11 helical transmembrane spans lie at 22-42, 52-72, 76-96, 102-122, 129-149, 161-181, 378-398, 415-435, 439-459, 465-485, and 491-511; these read FAFK…HLQL, AAIV…SGAI, GMLR…IIIA, VVML…SSLV, IFGL…GTPL, EIVL…PRSI, LFWL…IAVV, FLFG…FIMP, QSML…GLEV, GSLG…PMTF, and LDSA…IMLI.

The protein belongs to the aromatic acid exporter ArAE (TC 2.A.85) family.

Its subcellular location is the cell inner membrane. Functionally, forms an efflux pump with AaeA. Could function as a metabolic relief valve, allowing to eliminate certain compounds when they accumulate to high levels in the cell. The chain is p-hydroxybenzoic acid efflux pump subunit AaeB from Pectobacterium atrosepticum (strain SCRI 1043 / ATCC BAA-672) (Erwinia carotovora subsp. atroseptica).